An 868-amino-acid polypeptide reads, in one-letter code: Transcription factor pynR (868 aa).

The zn(2)-C6 fungal-type DNA-binding region spans 11-37 (CTFCRTRKIACSGERICNACRSRSIEC). 4 disordered regions span residues 51 to 88 (NKTT…TSAV), 662 to 683 (LSGS…LDLS), 715 to 761 (SGIP…ASDL), and 829 to 868 (GMGE…GMSN). Composition is skewed to low complexity over residues 663 to 683 (SGSR…LDLS) and 715 to 727 (SGIP…SISH).

It localises to the nucleus. Transcription factor that regulates the expression of the gene cluster that mediates the biosynthesis of pyranonigrins, a family of antioxidative compounds. The polypeptide is Transcription factor pynR (Aspergillus niger (strain ATCC MYA-4892 / CBS 513.88 / FGSC A1513)).